A 217-amino-acid chain; its full sequence is UPF0502 protein Smlt0097 (217 aa).

The protein belongs to the UPF0502 family.

This is UPF0502 protein Smlt0097 from Stenotrophomonas maltophilia (strain K279a).